We begin with the raw amino-acid sequence, 225 residues long: Leucyl/phenylalanyl-tRNA--protein transferase (225 aa).

Belongs to the L/F-transferase family.

It localises to the cytoplasm. The enzyme catalyses N-terminal L-lysyl-[protein] + L-leucyl-tRNA(Leu) = N-terminal L-leucyl-L-lysyl-[protein] + tRNA(Leu) + H(+). The catalysed reaction is N-terminal L-arginyl-[protein] + L-leucyl-tRNA(Leu) = N-terminal L-leucyl-L-arginyl-[protein] + tRNA(Leu) + H(+). It catalyses the reaction L-phenylalanyl-tRNA(Phe) + an N-terminal L-alpha-aminoacyl-[protein] = an N-terminal L-phenylalanyl-L-alpha-aminoacyl-[protein] + tRNA(Phe). Functionally, functions in the N-end rule pathway of protein degradation where it conjugates Leu, Phe and, less efficiently, Met from aminoacyl-tRNAs to the N-termini of proteins containing an N-terminal arginine or lysine. This Rhodopseudomonas palustris (strain TIE-1) protein is Leucyl/phenylalanyl-tRNA--protein transferase.